The sequence spans 200 residues: Adenylyl-sulfate kinase (200 aa).

35–42 (GLPASGKS) serves as a coordination point for ATP. Serine 109 acts as the Phosphoserine intermediate in catalysis.

It belongs to the APS kinase family.

It catalyses the reaction adenosine 5'-phosphosulfate + ATP = 3'-phosphoadenylyl sulfate + ADP + H(+). It participates in sulfur metabolism; hydrogen sulfide biosynthesis; sulfite from sulfate: step 2/3. In terms of biological role, catalyzes the synthesis of activated sulfate. The chain is Adenylyl-sulfate kinase from Thermodesulfovibrio yellowstonii (strain ATCC 51303 / DSM 11347 / YP87).